A 201-amino-acid polypeptide reads, in one-letter code: 3-isopropylmalate dehydratase small subunit (201 aa).

This sequence belongs to the LeuD family. LeuD type 1 subfamily. Heterodimer of LeuC and LeuD.

The catalysed reaction is (2R,3S)-3-isopropylmalate = (2S)-2-isopropylmalate. The protein operates within amino-acid biosynthesis; L-leucine biosynthesis; L-leucine from 3-methyl-2-oxobutanoate: step 2/4. Functionally, catalyzes the isomerization between 2-isopropylmalate and 3-isopropylmalate, via the formation of 2-isopropylmaleate. The sequence is that of 3-isopropylmalate dehydratase small subunit from Rhodopseudomonas palustris (strain BisB18).